Consider the following 72-residue polypeptide: ATP-dependent Clp protease ATP-binding subunit ClpA homolog (72 aa).

The protein belongs to the ClpA/ClpB family.

The protein localises to the plastid. It is found in the chloroplast. In terms of biological role, may interact with a ClpP-like protease involved in degradation of denatured proteins in the chloroplast. The protein is ATP-dependent Clp protease ATP-binding subunit ClpA homolog of Populus euphratica (Euphrates poplar).